We begin with the raw amino-acid sequence, 137 residues long: MKIYCCLNTVGFFMDGCGVIPPDSKEITAEHWQSLLKSQAEGGVIDFSVFPPSIKEVIRTHDDEVADANFQKQMLISDATDFINSRQWQGKAALGRLKEDELKQYNLWLDYLEALELVDTSSAPDIEWPTPPAVQAR.

It to E.coli YfdK.

This is an uncharacterized protein from Escherichia coli (strain K12).